Here is a 267-residue protein sequence, read N- to C-terminus: Diacetylchitobiose deacetylase (267 aa).

It belongs to the PIGL family. As to quaternary structure, homohexamer.

It is found in the cytoplasm. The catalysed reaction is N,N'-diacetylchitobiose + H2O = beta-D-glucosaminyl-(1-&gt;4)-N-acetyl-D-glucosamine + acetate. The protein operates within glycan degradation; chitin degradation. Deacylates the non-reducing end of diacetylchitobiose (GlcNAc2). Can also use N-acetylglucosamine (GlcNAc) and N-acetylchitotriose (GlcNAc3). Probably involved in chitin degradation. This Thermococcus kodakarensis (strain ATCC BAA-918 / JCM 12380 / KOD1) (Pyrococcus kodakaraensis (strain KOD1)) protein is Diacetylchitobiose deacetylase (dac).